Reading from the N-terminus, the 464-residue chain is Tryprostatin B synthase (464 aa).

Residues methionine 94 and glutamate 102 each contribute to the brevianamide F site. Arginine 113, lysine 201, and tyrosine 203 together coordinate dimethylallyl diphosphate. Tyrosine 205 serves as a coordination point for brevianamide F. 6 residues coordinate dimethylallyl diphosphate: lysine 294, tyrosine 296, glutamine 380, tyrosine 382, tyrosine 446, and tyrosine 450.

Belongs to the tryptophan dimethylallyltransferase family.

The enzyme catalyses brevianamide F + dimethylallyl diphosphate = tryprostatin B + diphosphate. It participates in mycotoxin biosynthesis. In terms of biological role, brevianamide F prenyltransferase; part of the gene cluster that mediates the biosynthesis of fumitremorgins, indole alkaloids that carry not only intriguing chemical structures, but also interesting biological and pharmacological activities. The biosynthesis of fumitremorgin-type alkaloids begins by condensation of the two amino acids L-tryptophan and L-proline to brevianamide F, catalyzed by the non-ribosomal peptide synthetase ftmA. Brevianamide F is then prenylated by the prenyltransferase ftmPT1/ftmB in the presence of dimethylallyl diphosphate, resulting in the formation of tryprostatin B. The three cytochrome P450 monooxygenases, ftmP450-1/ftmC, ftmP450-2/ftmE and ftmP450-3/FtmG, are responsible for the conversion of tryprostatin B to 6-hydroxytryprostatin B, tryprostatin A to fumitremorgin C and fumitremorgin C to 12,13-dihydroxyfumitremorgin C, respectively. The putative methyltransferase ftmMT/ftmD is expected for the conversion of 6-hydroxytryprostatin B to tryprostatin A. FtmPT2/FtmH catalyzes the prenylation of 12,13-dihydroxyfumitre-morgin C in the presence of dimethylallyl diphosphate, resulting in the formation of fumitremorgin B. Fumitremorgin B is further converted to verruculogen by ftmOx1/ftmF via the insertion of an endoperoxide bond between the two prenyl moieties. In some fungal species, verruculogen is further converted to fumitremorgin A, but the enzymes involved in this step have not been identified yet. This chain is Tryprostatin B synthase, found in Aspergillus fumigatus (Neosartorya fumigata).